A 554-amino-acid chain; its full sequence is Glutamine--tRNA ligase (554 aa).

Positions 34–44 (PEPNGYLHIGH) match the 'HIGH' region motif. Residues 35–37 (EPN) and 41–47 (HIGHAKS) contribute to the ATP site. L-glutamine contacts are provided by aspartate 67 and tyrosine 212. Residues threonine 231, 261–262 (RL), and 269–271 (MSK) contribute to the ATP site. The 'KMSKS' region signature appears at 268–272 (VMSKR). Residues 317–324 (TKQDNTIE) form an interaction with tRNA region.

Belongs to the class-I aminoacyl-tRNA synthetase family. As to quaternary structure, monomer.

The protein localises to the cytoplasm. It catalyses the reaction tRNA(Gln) + L-glutamine + ATP = L-glutaminyl-tRNA(Gln) + AMP + diphosphate. This chain is Glutamine--tRNA ligase, found in Escherichia coli O17:K52:H18 (strain UMN026 / ExPEC).